A 244-amino-acid polypeptide reads, in one-letter code: 5-oxoprolinase subunit A (244 aa).

The protein belongs to the LamB/PxpA family. Forms a complex composed of PxpA, PxpB and PxpC.

It carries out the reaction 5-oxo-L-proline + ATP + 2 H2O = L-glutamate + ADP + phosphate + H(+). Catalyzes the cleavage of 5-oxoproline to form L-glutamate coupled to the hydrolysis of ATP to ADP and inorganic phosphate. The polypeptide is 5-oxoprolinase subunit A (Salmonella schwarzengrund (strain CVM19633)).